We begin with the raw amino-acid sequence, 293 residues long: tRNA-cytidine(32) 2-sulfurtransferase (293 aa).

The PP-loop motif motif lies at 62 to 67 (SGGKDS). Residues Cys137, Cys140, and Cys228 each contribute to the [4Fe-4S] cluster site.

The protein belongs to the TtcA family. As to quaternary structure, homodimer. Requires Mg(2+) as cofactor. [4Fe-4S] cluster is required as a cofactor.

Its subcellular location is the cytoplasm. It catalyses the reaction cytidine(32) in tRNA + S-sulfanyl-L-cysteinyl-[cysteine desulfurase] + AH2 + ATP = 2-thiocytidine(32) in tRNA + L-cysteinyl-[cysteine desulfurase] + A + AMP + diphosphate + H(+). The protein operates within tRNA modification. Functionally, catalyzes the ATP-dependent 2-thiolation of cytidine in position 32 of tRNA, to form 2-thiocytidine (s(2)C32). The sulfur atoms are provided by the cysteine/cysteine desulfurase (IscS) system. This Brucella abortus (strain S19) protein is tRNA-cytidine(32) 2-sulfurtransferase.